The primary structure comprises 341 residues: GDP-mannose transporter GONST5 (341 aa).

8 helical membrane passes run 17 to 37, 44 to 64, 89 to 109, 141 to 161, 192 to 212, 233 to 253, 260 to 280, and 284 to 304; these read LSIL…KWIF, FPLS…YIVI, FVFC…PVSF, LVPI…FNVF, INTV…PAFL, IILF…FYVI, TFNV…WMIF, and ISPM…FYGY. Positions 33–152 constitute an EamA domain; it reads NKWIFQKLDF…PIVGGILLTS (120 aa).

The protein belongs to the TPT transporter family. TPT (TC 2.A.7.9) subfamily. As to expression, expressed in rosette leaves, flowers and siliques.

It localises to the golgi apparatus membrane. In terms of biological role, GDP-mannose transporter that may be involved in the import of GDP-mannose from the cytoplasm into the Golgi lumen. In Arabidopsis thaliana (Mouse-ear cress), this protein is GDP-mannose transporter GONST5 (GONST5).